We begin with the raw amino-acid sequence, 66 residues long: Regulator of G-protein signaling 6 (66 aa).

The RGS domain maps to 1 to 66; the sequence is LAVQDLKKQP…EDAQEHIYKL (66 aa).

As to quaternary structure, interacts with GNB5. Interacts with RGS7BP, leading to regulate the subcellular location of the heterodimer formed with GNB5. Interacts with GNAI1.

It localises to the cytoplasm. It is found in the cytosol. Its subcellular location is the membrane. The protein localises to the nucleus. The protein resides in the cell membrane. Its function is as follows. Regulates G protein-coupled receptor signaling cascades. Inhibits signal transduction by increasing the GTPase activity of G protein alpha subunits, thereby driving them into their inactive GDP-bound form. The RGS6/GNB5 dimer enhances GNAO1 GTPase activity. This chain is Regulator of G-protein signaling 6 (Rgs6), found in Rattus norvegicus (Rat).